The primary structure comprises 149 residues: Lipoprotein signal peptidase (149 aa).

The next 3 membrane-spanning stretches (helical) occupy residues Ser24–Leu44, Lys57–Trp77, and Gly81–Ile101. Catalysis depends on residues Asp111 and Asp127. A helical transmembrane segment spans residues Ile122–Leu142.

This sequence belongs to the peptidase A8 family.

Its subcellular location is the cell membrane. It carries out the reaction Release of signal peptides from bacterial membrane prolipoproteins. Hydrolyzes -Xaa-Yaa-Zaa-|-(S,diacylglyceryl)Cys-, in which Xaa is hydrophobic (preferably Leu), and Yaa (Ala or Ser) and Zaa (Gly or Ala) have small, neutral side chains.. Its pathway is protein modification; lipoprotein biosynthesis (signal peptide cleavage). Its function is as follows. This protein specifically catalyzes the removal of signal peptides from prolipoproteins. The sequence is that of Lipoprotein signal peptidase from Lactiplantibacillus plantarum (strain ATCC BAA-793 / NCIMB 8826 / WCFS1) (Lactobacillus plantarum).